Consider the following 283-residue polypeptide: Pantothenate synthetase (283 aa).

Residue Met-30 to His-37 participates in ATP binding. Residue His-37 is the Proton donor of the active site. Gln-61 provides a ligand contact to (R)-pantoate. Residue Gln-61 coordinates beta-alanine. Gly-149–Asp-152 provides a ligand contact to ATP. Gln-155 contacts (R)-pantoate. Residues Leu-178 and Met-186–Arg-189 each bind ATP.

The protein belongs to the pantothenate synthetase family. As to quaternary structure, homodimer.

It localises to the cytoplasm. The enzyme catalyses (R)-pantoate + beta-alanine + ATP = (R)-pantothenate + AMP + diphosphate + H(+). It participates in cofactor biosynthesis; (R)-pantothenate biosynthesis; (R)-pantothenate from (R)-pantoate and beta-alanine: step 1/1. Catalyzes the condensation of pantoate with beta-alanine in an ATP-dependent reaction via a pantoyl-adenylate intermediate. The protein is Pantothenate synthetase of Hahella chejuensis (strain KCTC 2396).